A 140-amino-acid polypeptide reads, in one-letter code: Protein PsiE homolog (140 aa).

Transmembrane regions (helical) follow at residues 16–36 (IVLQYILNVALICLGVVLSVF), 57–77 (YHLIDSIVVFFLYFEFIVMII), 85–105 (HFPLRYFIYIGITAIVRLIII), and 110–130 (PLDLLLYACAIFVLISALFIA).

This sequence belongs to the PsiE family.

The protein resides in the cell membrane. In Bacillus cereus (strain ATCC 14579 / DSM 31 / CCUG 7414 / JCM 2152 / NBRC 15305 / NCIMB 9373 / NCTC 2599 / NRRL B-3711), this protein is Protein PsiE homolog.